Reading from the N-terminus, the 316-residue chain is Taste receptor type 2 member 109 (316 aa).

Residues 1–14 lie on the Extracellular side of the membrane; that stretch reads MEHLLKRTFDITEN. Residues 15 to 35 form a helical membrane-spanning segment; the sequence is ILLIILFIELIIGLIGNGFTA. The Cytoplasmic segment spans residues 36–62; it reads LVHCMDWVKRKKMSLVNKILTALATSR. A helical transmembrane segment spans residues 63–83; sequence IFLLWFMLVGFPISSLYPYLV. Topologically, residues 84–94 are extracellular; it reads TTRLMIQFTST. A helical transmembrane segment spans residues 95-115; sequence LWTIANHISVWFATCLSVFYF. Over 116–135 the chain is Cytoplasmic; it reads LKIANFSNSPFLYLKRRVEK. A helical membrane pass occupies residues 136 to 156; sequence VVSVTLLVSLVLLFLNILLLN. Topologically, residues 157–191 are extracellular; it reads LEINMCINEYHQINISYIFISYYHLSCQIQVLGSH. N-linked (GlcNAc...) asparagine glycosylation is present at asparagine 170. The chain crosses the membrane as a helical span at residues 192–212; sequence IIFLSVPVVLSLSTFLLLIFS. Residues 213–241 lie on the Cytoplasmic side of the membrane; it reads LWTLHKRMQQHVQGGRDARTTAHFKALQA. The helical transmembrane segment at 242–262 threads the bilayer; it reads VIAFLLLYSIFILSLLLQFWI. Topologically, residues 263–270 are extracellular; sequence HGLRKKPP. A helical transmembrane segment spans residues 271–291; the sequence is FIAFCQVVDTAFPSFHSYVLI. Residues 292 to 316 are Cytoplasmic-facing; the sequence is LRDRKLRHASLSVLSWLKCRPNYVK.

The protein belongs to the G-protein coupled receptor T2R family.

It localises to the membrane. In terms of biological role, putative taste receptor which may play a role in the perception of bitterness. This Mus musculus (Mouse) protein is Taste receptor type 2 member 109.